Reading from the N-terminus, the 393-residue chain is Eukaryotic translation initiation factor 5 (393 aa).

GTP is bound at residue 28–35 (GKGNGIKT). 2 disordered regions span residues 144–179 (KAVS…DEED) and 217–247 (EPQS…SISS). Residues 223-385 (EEQDEDDEQE…ETAEEEEEDE (163 aa)) enclose the W2 domain. Residues 224-233 (EQDEDDEQEE) show a composition bias toward acidic residues.

The protein belongs to the eIF-2-beta/eIF-5 family.

Its function is as follows. Catalyzes the hydrolysis of GTP bound to the 40S ribosomal initiation complex (40S.mRNA.Met-tRNA[F].eIF-2.GTP) with the subsequent joining of a 60S ribosomal subunit resulting in the release of eIF-2 and the guanine nucleotide. The subsequent joining of a 60S ribosomal subunit results in the formation of a functional 80S initiation complex (80S.mRNA.Met-tRNA[F]). In Dictyostelium discoideum (Social amoeba), this protein is Eukaryotic translation initiation factor 5 (eif5).